The following is a 257-amino-acid chain: uncharacterized protein (257 aa).

Residues S122 and H236 each act as charge relay system in the active site.

The protein belongs to the peptidase S9B family.

This is an uncharacterized protein from Bacillus subtilis (strain 168).